Here is a 159-residue protein sequence, read N- to C-terminus: Short coiled-coil protein (159 aa).

Residues 78–146 (MMNADMDAVD…QYIENLMSAS (69 aa)) are a coiled coil.

It belongs to the SCOC family. In terms of assembly, homodimer. Interacts with ARL1, ARL2 and ARL3. Directly interacts with FEZ1 and UVRAG. The interaction with UVRAG is reduced by amino acid starvation, but the complex is stabilized in the presence of FEZ1. Interacts with NRBF2. Widely expressed with highest levels in brain, heart and skeletal muscle.

The protein resides in the golgi apparatus membrane. It localises to the golgi apparatus. The protein localises to the trans-Golgi network. It is found in the cytoplasm. Its subcellular location is the cytosol. Functionally, positive regulator of amino acid starvation-induced autophagy. In Homo sapiens (Human), this protein is Short coiled-coil protein (SCOC).